A 181-amino-acid polypeptide reads, in one-letter code: MENTQENPTTPSAEDIGSEKQAAQGAAPAAEAADAALAEAQAKVAELQESFLRAKAETENVRRRAQDDVSKAHKFAIESFAEHLLPVLDSLEAAVNDTSGDIAKVREGVELTLRQLTSALEKGRVVAINPIGEKFDPHQHQAISMVPAEQEPNTVVSVLQKGYTIADRVLRPALVTVAQPK.

The segment covering 1–12 has biased composition (polar residues); it reads MENTQENPTTPS. The tract at residues 1–33 is disordered; it reads MENTQENPTTPSAEDIGSEKQAAQGAAPAAEAA. Positions 21-33 are enriched in low complexity; sequence QAAQGAAPAAEAA.

Belongs to the GrpE family. Homodimer.

The protein resides in the cytoplasm. Participates actively in the response to hyperosmotic and heat shock by preventing the aggregation of stress-denatured proteins, in association with DnaK and GrpE. It is the nucleotide exchange factor for DnaK and may function as a thermosensor. Unfolded proteins bind initially to DnaJ; upon interaction with the DnaJ-bound protein, DnaK hydrolyzes its bound ATP, resulting in the formation of a stable complex. GrpE releases ADP from DnaK; ATP binding to DnaK triggers the release of the substrate protein, thus completing the reaction cycle. Several rounds of ATP-dependent interactions between DnaJ, DnaK and GrpE are required for fully efficient folding. The sequence is that of Protein GrpE from Burkholderia cenocepacia (strain HI2424).